The primary structure comprises 142 residues: MAKTMQLEIVSAEAAIFSGKVEMIVVTGGMGELGIYPGHRQLLTSLKPGQIKAILEGGKEEVFYMSGGMLEVQPEIVTILADTALRAVDLDEAAAISAKEEAERRLAKQKAGIEYSKAMTELAEAAAQLRAIQMLRKSAKKH.

Belongs to the ATPase epsilon chain family. In terms of assembly, F-type ATPases have 2 components, CF(1) - the catalytic core - and CF(0) - the membrane proton channel. CF(1) has five subunits: alpha(3), beta(3), gamma(1), delta(1), epsilon(1). CF(0) has three main subunits: a, b and c.

It localises to the cell inner membrane. Its function is as follows. Produces ATP from ADP in the presence of a proton gradient across the membrane. The chain is ATP synthase epsilon chain from Coxiella burnetii (strain CbuK_Q154) (Coxiella burnetii (strain Q154)).